The chain runs to 150 residues: Group IIC secretory phospholipase A2 (150 aa).

The first 20 residues, 1 to 20, serve as a signal peptide directing secretion; sequence MKGIAVFLVFIFCWTTSTLS. Disulfide bonds link Cys-46/Cys-143, Cys-48/Cys-64, Cys-63/Cys-121, Cys-69/Cys-150, Cys-70/Cys-114, Cys-79/Cys-107, Cys-97/Cys-112, and Cys-99/Cys-105. Residues Tyr-47, Gly-49, and Gly-51 each contribute to the Ca(2+) site. His-67 is a catalytic residue. Asp-68 lines the Ca(2+) pocket. An N-linked (GlcNAc...) asparagine glycan is attached at Asn-92. Asp-115 is a catalytic residue.

Belongs to the phospholipase A2 family. The cofactor is Ca(2+).

Its subcellular location is the secreted. The enzyme catalyses a 1,2-diacyl-sn-glycero-3-phosphocholine + H2O = a 1-acyl-sn-glycero-3-phosphocholine + a fatty acid + H(+). Its function is as follows. PA2 catalyzes the calcium-dependent hydrolysis of the 2-acyl groups in 3-sn-phosphoglycerides. This is Group IIC secretory phospholipase A2 (Pla2g2c) from Rattus norvegicus (Rat).